Here is a 1711-residue protein sequence, read N- to C-terminus: Serine/threonine-protein kinase MRCK beta (1711 aa).

The region spanning 76-342 (FEIIKVIGRG…IEDFKKHAFF (267 aa)) is the Protein kinase domain. Residues 82 to 90 (IGRGAFGEV) and Lys-105 contribute to the ATP site. Asp-200 functions as the Proton acceptor in the catalytic mechanism. Phosphoserine; by autocatalysis occurs at positions 221 and 233. The residue at position 239 (Thr-239) is a Phosphothreonine; by autocatalysis. The 71-residue stretch at 343–413 (EGLNWENIRN…TTESCFSDRG (71 aa)) folds into the AGC-kinase C-terminal domain. At Thr-423 the chain carries Phosphothreonine. 2 coiled-coil regions span residues 431-815 (QRDL…AHWE) and 878-939 (ELQS…FRAD). Residues 461 to 484 (LQESTQTVQSLHGSSRALSNSNRD) are disordered. Positions 463-481 (ESTQTVQSLHGSSRALSNS) are enriched in polar residues. An Omega-N-methylarginine modification is found at Arg-671. At Tyr-954 the chain carries Phosphotyrosine. The disordered stretch occupies residues 969 to 1009 (SSASEQETQAPKPEASPSMSVAASEQQEDMARPPQRPSAVP). The Phorbol-ester/DAG-type zinc-finger motif lies at 1025–1075 (AHQFSIKSFSSPTQCSHCTSLMVGLIRQGYACEVCSFACHVSCKDGAPQVC). The region spanning 1095–1214 (GTAYKGHVKV…WVGILEGLQS (120 aa)) is the PH domain. One can recognise a CNH domain in the interval 1240–1513 (IKAILTAAIV…RPLNSEGTLN (274 aa)). The CRIB domain occupies 1583-1596 (ISNPTNFNHVAHMG). Residues 1611-1711 (AVPPSQEERP…EGLEQPACDT (101 aa)) are disordered. Residues 1641–1650 (WPSSGGSEPS) show a composition bias toward polar residues. The segment covering 1664 to 1675 (DFDKEPDSDSTK) has biased composition (basic and acidic residues). Phosphoserine is present on residues Ser-1680, Ser-1682, Ser-1686, Ser-1690, and Ser-1693.

It belongs to the protein kinase superfamily. AGC Ser/Thr protein kinase family. DMPK subfamily. In terms of assembly, homodimer and homotetramer via the coiled coil regions. Interacts tightly with GTP-bound but not GDP-bound CDC42. Interacts with TJP1, when in the presence of catalytically active CDC42. Forms a tripartite complex with MYO18A and LURAP1 with the latter acting as an adapter connecting CDC42BPB and MYO18A. LURAP1 binding results in activation of CDC42BPB by abolition of its negative autoregulation. Interacts with STRIP1, STRN3 and SIKE1. Interacts with CPNE4 (via VWFA domain). Interacts with LURAP1. Interacts (via AGC-kinase C-terminal domain) with FAM89B/LRAP25 (via LRR repeat). Forms a tripartite complex with FAM89B/LRAP25 and LIMK1. Requires Mg(2+) as cofactor. In terms of processing, proteolytically cleaved by caspases upon apoptosis induction. In terms of tissue distribution, expressed in all tissues examined, with high levels in heart, brain, placenta and lung.

The protein localises to the cytoplasm. The protein resides in the cell membrane. It localises to the cell junction. Its subcellular location is the cell projection. It is found in the lamellipodium. It carries out the reaction L-seryl-[protein] + ATP = O-phospho-L-seryl-[protein] + ADP + H(+). The catalysed reaction is L-threonyl-[protein] + ATP = O-phospho-L-threonyl-[protein] + ADP + H(+). Maintained in an inactive, closed conformation by an interaction between the kinase domain and the negative autoregulatory C-terminal coiled-coil region. Agonist binding to the phorbol ester binding site disrupts this, releasing the kinase domain to allow N-terminus-mediated dimerization and kinase activation by transautophosphorylation. Inhibited by chelerythrine chloride. Functionally, serine/threonine-protein kinase which is an important downstream effector of CDC42 and plays a role in the regulation of cytoskeleton reorganization and cell migration. Regulates actin cytoskeletal reorganization via phosphorylation of PPP1R12C and MYL9/MLC2. In concert with MYO18A and LURAP1, is involved in modulating lamellar actomyosin retrograde flow that is crucial to cell protrusion and migration. Phosphorylates PPP1R12A. In concert with FAM89B/LRAP25 mediates the targeting of LIMK1 to the lamellipodium resulting in its activation and subsequent phosphorylation of CFL1 which is important for lamellipodial F-actin regulation. The polypeptide is Serine/threonine-protein kinase MRCK beta (Homo sapiens (Human)).